The sequence spans 490 residues: Glycogen synthase kinase-3 alpha (490 aa).

Residues 1 to 15 are compositionally biased toward gly residues; sequence MSGGGPSGGGPGGSG. Residues 1–97 form a disordered region; it reads MSGGGPSGGG…PPGVKLGRDS (97 aa). S2 carries the post-translational modification N-acetylserine. A Phosphoserine modification is found at S2. S21 is subject to Phosphoserine; by PKB/AKT1. Positions 25–82 are enriched in gly residues; that stretch reads PGGGGGGGGGGPGGSASGPGGTGGGKASVGAMGGGVGASSSGGGPSGSGGGGSGGPGA. A phosphoserine mark is found at S72, S77, and S97. The Protein kinase domain maps to 119–404; the sequence is YTDIKVIGNG…PLEACAHSFF (286 aa). Residues 125 to 133 and K148 each bind ATP; that span reads IGNGSFGVV. D244 (proton acceptor) is an active-site residue. Position 279 is a phosphotyrosine (Y279). The tract at residues 451 to 490 is disordered; it reads GPASPLTTSYNPSSQALTEAQTGQDWQPSDATTATLASSS. Residues 455 to 480 are compositionally biased toward polar residues; that stretch reads PLTTSYNPSSQALTEAQTGQDWQPSD. Residues 481–490 are compositionally biased toward low complexity; sequence ATTATLASSS.

The protein belongs to the protein kinase superfamily. CMGC Ser/Thr protein kinase family. GSK-3 subfamily. As to quaternary structure, monomer. Interacts with AXIN1 and CTNNB1/beta-catenin. Interacts with ARRB2. Interacts with CTNND2. Interacts with LMBR1L. Interacts with DDX3X. Interacts with TNFRSF10B. Phosphorylated by AKT1 at Ser-21: upon insulin-mediated signaling, the activated PKB/AKT1 protein kinase phosphorylates and deactivates GSK3A, resulting in the dephosphorylation and activation of GYS1. Activated by phosphorylation at Tyr-279.

The catalysed reaction is L-seryl-[tau protein] + ATP = O-phospho-L-seryl-[tau protein] + ADP + H(+). It carries out the reaction L-threonyl-[tau protein] + ATP = O-phospho-L-threonyl-[tau protein] + ADP + H(+). It catalyses the reaction L-seryl-[protein] + ATP = O-phospho-L-seryl-[protein] + ADP + H(+). The enzyme catalyses L-threonyl-[protein] + ATP = O-phospho-L-threonyl-[protein] + ADP + H(+). With respect to regulation, activated by phosphorylation at Tyr-279. In response to insulin, inhibited by phosphorylation at Ser-21 by PKB/AKT1; phosphorylation at this site causes a conformational change, preventing access of substrates to the active site. Inhibited by lithium. In terms of biological role, constitutively active protein kinase that acts as a negative regulator in the hormonal control of glucose homeostasis, Wnt signaling and regulation of transcription factors and microtubules, by phosphorylating and inactivating glycogen synthase (GYS1 or GYS2), CTNNB1/beta-catenin, APC and AXIN1. Requires primed phosphorylation of the majority of its substrates. Contributes to insulin regulation of glycogen synthesis by phosphorylating and inhibiting GYS1 activity and hence glycogen synthesis. Regulates glycogen metabolism in liver, but not in muscle. May also mediate the development of insulin resistance by regulating activation of transcription factors. In Wnt signaling, regulates the level and transcriptional activity of nuclear CTNNB1/beta-catenin. Facilitates amyloid precursor protein (APP) processing and the generation of APP-derived amyloid plaques found in Alzheimer disease. May be involved in the regulation of replication in pancreatic beta-cells. Is necessary for the establishment of neuronal polarity and axon outgrowth. Through phosphorylation of the anti-apoptotic protein MCL1, may control cell apoptosis in response to growth factors deprivation. Acts as a regulator of autophagy by mediating phosphorylation of KAT5/TIP60 under starvation conditions, activating KAT5/TIP60 acetyltransferase activity and promoting acetylation of key autophagy regulators, such as ULK1 and RUBCNL/Pacer. Negatively regulates extrinsic apoptotic signaling pathway via death domain receptors. Promotes the formation of an anti-apoptotic complex, made of DDX3X, BRIC2 and GSK3B, at death receptors, including TNFRSF10B. The anti-apoptotic function is most effective with weak apoptotic signals and can be overcome by stronger stimulation. This chain is Glycogen synthase kinase-3 alpha (Gsk3a), found in Mus musculus (Mouse).